We begin with the raw amino-acid sequence, 549 residues long: Probable protein kinase UbiB (549 aa).

In terms of domain architecture, Protein kinase spans aspartate 123–leucine 501. ATP contacts are provided by residues leucine 129–valine 137 and lysine 152. The active-site Proton acceptor is aspartate 287. Transmembrane regions (helical) follow at residues serine 498–glutamine 518 and alanine 520–tryptophan 540.

Belongs to the ABC1 family. UbiB subfamily.

Its subcellular location is the cell inner membrane. It participates in cofactor biosynthesis; ubiquinone biosynthesis [regulation]. Its function is as follows. Is probably a protein kinase regulator of UbiI activity which is involved in aerobic coenzyme Q (ubiquinone) biosynthesis. The sequence is that of Probable protein kinase UbiB from Shewanella oneidensis (strain ATCC 700550 / JCM 31522 / CIP 106686 / LMG 19005 / NCIMB 14063 / MR-1).